A 1091-amino-acid chain; its full sequence is AP-3 complex subunit beta-1 (1091 aa).

2 disordered regions span residues 1–32 and 267–290; these read MSGN…SPSG and EDNE…KKKP. Basic and acidic residues predominate over residues 267–288; it reads EDNEKNFYESDDEQKEKTDQKK. 2 positions are modified to phosphoserine: S276 and S609. The disordered stretch occupies residues 664 to 807; the sequence is AGKAKKENPA…EKEKKTKEDR (144 aa). Residues 667 to 678 show a composition bias toward basic and acidic residues; the sequence is AKKENPARKFYS. Acidic residues-rich tracts occupy residues 679-695 and 703-718; these read DSEE…DSES and EQDE…SEDS. Positions 719–736 are enriched in basic and acidic residues; it reads SSEHRSDSESVSEVGDKR. Phosphoserine occurs at positions 748 and 750. A compositionally biased stretch (low complexity) spans 763-775; the sequence is SDSSSTDSSSVEE. The segment covering 776–789 has biased composition (acidic residues); it reads SSSDSESESESESE. The span at 790 to 807 shows a compositional bias: basic and acidic residues; it reads SESKKVTMEKEKKTKEDR.

This sequence belongs to the adaptor complexes large subunit family. Adaptor protein complex 3 (AP-3) is a heterotetramer composed of two large adaptins (delta-type subunit AP3D1 and beta-type subunit AP3B1 or AP3B2), a medium adaptin (mu-type subunit AP3M1 or AP3M2) and a small adaptin (sigma-type subunit APS1 or AP3S2). AP-3 associates with the BLOC-1 complex. Interacts with KIF3A; interaction is direct; interaction is impaired by pyrophosphorylation of AP3B1. Post-translationally, phosphorylated on serine residues. Pyrophosphorylation by 5-diphosphoinositol pentakisphosphate (5-IP7) impairs interaction with KIF3A. Serine pyrophosphorylation is achieved by Mg(2+)-dependent, but enzyme independent transfer of a beta-phosphate from a inositol pyrophosphate to a pre-phosphorylated serine residue.

The protein resides in the cytoplasmic vesicle. It localises to the clathrin-coated vesicle membrane. Its subcellular location is the golgi apparatus. Subunit of non-clathrin- and clathrin-associated adaptor protein complex 3 (AP-3) that plays a role in protein sorting in the late-Golgi/trans-Golgi network (TGN) and/or endosomes. The AP complexes mediate both the recruitment of clathrin to membranes and the recognition of sorting signals within the cytosolic tails of transmembrane cargo molecules. AP-3 appears to be involved in the sorting of a subset of transmembrane proteins targeted to lysosomes and lysosome-related organelles. In concert with the BLOC-1 complex, AP-3 is required to target cargos into vesicles assembled at cell bodies for delivery into neurites and nerve terminals. This chain is AP-3 complex subunit beta-1 (AP3B1), found in Canis lupus familiaris (Dog).